The sequence spans 301 residues: Small ribosomal subunit biogenesis GTPase RsgA (301 aa).

Residues 63–224 (INALVRPPIA…IADTPGFSSY (162 aa)) form the CP-type G domain. Residues 112–115 (SKAD) and 167–175 (GQTGAGKST) contribute to the GTP site. Positions 248, 253, 255, and 261 each coordinate Zn(2+).

This sequence belongs to the TRAFAC class YlqF/YawG GTPase family. RsgA subfamily. As to quaternary structure, monomer. Associates with 30S ribosomal subunit, binds 16S rRNA. It depends on Zn(2+) as a cofactor.

The protein localises to the cytoplasm. One of several proteins that assist in the late maturation steps of the functional core of the 30S ribosomal subunit. Helps release RbfA from mature subunits. May play a role in the assembly of ribosomal proteins into the subunit. Circularly permuted GTPase that catalyzes slow GTP hydrolysis, GTPase activity is stimulated by the 30S ribosomal subunit. The protein is Small ribosomal subunit biogenesis GTPase RsgA of Leuconostoc citreum (strain KM20).